A 207-amino-acid polypeptide reads, in one-letter code: Shikimate kinase (207 aa).

An ATP-binding site is contributed by 32–37 (GVGKST). A Mg(2+)-binding site is contributed by serine 36. The substrate site is built by aspartate 54, arginine 78, and glycine 100. Position 138 (arginine 138) interacts with ATP. Arginine 157 is a substrate binding site.

It belongs to the shikimate kinase family. Monomer. It depends on Mg(2+) as a cofactor.

It is found in the cytoplasm. The enzyme catalyses shikimate + ATP = 3-phosphoshikimate + ADP + H(+). It functions in the pathway metabolic intermediate biosynthesis; chorismate biosynthesis; chorismate from D-erythrose 4-phosphate and phosphoenolpyruvate: step 5/7. Functionally, catalyzes the specific phosphorylation of the 3-hydroxyl group of shikimic acid using ATP as a cosubstrate. The chain is Shikimate kinase from Bradyrhizobium diazoefficiens (strain JCM 10833 / BCRC 13528 / IAM 13628 / NBRC 14792 / USDA 110).